The primary structure comprises 80 residues: MKTGIKKVKLHVRKNDEVTVIAGNDKGKSGKVLKVFPQKGRVIVEGVNIRKRHMRPTQGMPQGAIIEREFPIHVSNVKKS.

It belongs to the universal ribosomal protein uL24 family. Part of the 50S ribosomal subunit.

Its function is as follows. One of two assembly initiator proteins, it binds directly to the 5'-end of the 23S rRNA, where it nucleates assembly of the 50S subunit. Functionally, one of the proteins that surrounds the polypeptide exit tunnel on the outside of the subunit. The protein is Large ribosomal subunit protein uL24 of Chlorobaculum tepidum (strain ATCC 49652 / DSM 12025 / NBRC 103806 / TLS) (Chlorobium tepidum).